Here is a 497-residue protein sequence, read N- to C-terminus: Glucose-6-phosphate isomerase (497 aa).

Glu350 functions as the Proton donor in the catalytic mechanism. Catalysis depends on residues His381 and Lys485.

The protein belongs to the GPI family.

It is found in the cytoplasm. The catalysed reaction is alpha-D-glucose 6-phosphate = beta-D-fructose 6-phosphate. The protein operates within carbohydrate biosynthesis; gluconeogenesis. It participates in carbohydrate degradation; glycolysis; D-glyceraldehyde 3-phosphate and glycerone phosphate from D-glucose: step 2/4. Functionally, catalyzes the reversible isomerization of glucose-6-phosphate to fructose-6-phosphate. The polypeptide is Glucose-6-phosphate isomerase (Legionella pneumophila).